A 104-amino-acid chain; its full sequence is Large ribosomal subunit protein uL24 (104 aa).

The protein belongs to the universal ribosomal protein uL24 family. In terms of assembly, part of the 50S ribosomal subunit.

One of two assembly initiator proteins, it binds directly to the 5'-end of the 23S rRNA, where it nucleates assembly of the 50S subunit. In terms of biological role, one of the proteins that surrounds the polypeptide exit tunnel on the outside of the subunit. The protein is Large ribosomal subunit protein uL24 of Pectobacterium atrosepticum (strain SCRI 1043 / ATCC BAA-672) (Erwinia carotovora subsp. atroseptica).